The following is a 690-amino-acid chain: Guanylate cyclase soluble subunit alpha-1 (690 aa).

Position 266 is a phosphoserine (Ser-266). Residues Thr-480–Glu-607 form the Guanylate cyclase domain.

The protein belongs to the adenylyl cyclase class-4/guanylyl cyclase family. In terms of assembly, the active enzyme is formed by a heterodimer of an alpha and a beta subunit. Heterodimer with GUCY1B1. Mg(2+) is required as a cofactor. It depends on Mn(2+) as a cofactor.

Its subcellular location is the cytoplasm. It catalyses the reaction GTP = 3',5'-cyclic GMP + diphosphate. Its activity is regulated as follows. Activated by nitric oxide in the presence of magnesium or manganese ions. This chain is Guanylate cyclase soluble subunit alpha-1 (Gucy1a1), found in Rattus norvegicus (Rat).